Here is a 436-residue protein sequence, read N- to C-terminus: MSIQKVHAREILDSRGNPTIEVEITTGKGMFRSCVPSGASTGVHEAVELRDGDKKRYGGKGVLKAVENVNTIIGPALLGKNVLNQAELDEMMIKLDGTNNKGKLGANAILGCSMSICRAAAAEKGLPLYKYLAELTGHKEMTMPVPCFNVINGGAHAGNALAMQEFMICPTGATNFHEALRMAAETYQCLKVVIKAKYGQDATNVGDEGGFAPNVSGAREALDLLVEAIAKAGYTGKIEIAMDCAASEFYNEETKKYDLGKKIPADKKDPSLVKDVDGLIAEYVDYGKHYPIASIEDPFAEDDWAAWNKFTVEHGNFQIVGDDLLVTNPARVQMAMDKNACNSVLIKVNQIGTLTETFKTIKMAQEKGWGVMASHRSGETEDTFIADLVVGLNCKQIKTGAPCRSERLCKYNQLMRIEEELGNIPYAGKNWRNSTA.

Ser-40 is a Mg(2+) binding site. Cys-147 and Cys-169 form a disulfide bridge. The (2R)-2-phosphoglycerate site is built by Gln-164 and Glu-208. Glu-208 (proton donor) is an active-site residue. Mg(2+) is bound by residues Asp-243, Glu-296, and Asp-322. Position 322 (Asp-322) interacts with (2R)-2-phosphoglycerate. The active-site Proton acceptor is Lys-347. Residues Arg-376 and Ser-377 each contribute to the (2R)-2-phosphoglycerate site.

It belongs to the enolase family. As to quaternary structure, homodimer. Homotetramer. Interacts with methyltransferase METH; the interaction inhibits METH catalytic activity; 2-phosphoglycerate binding to ENO prevents the interaction with METH. Mg(2+) serves as cofactor.

The protein resides in the cytoplasm. Its subcellular location is the nucleus. The catalysed reaction is (2R)-2-phosphoglycerate = phosphoenolpyruvate + H2O. It participates in carbohydrate degradation; glycolysis; pyruvate from D-glyceraldehyde 3-phosphate: step 4/5. Its function is as follows. Glycolytic enzyme that catalyzes the conversion of 2-phosphoglycerate to phosphoenolpyruvate. Inhibits tRNA methyltransferase METH catalytic activity in the absence of 2-phosphoglycerate. The polypeptide is Enolase 1 (Entamoeba histolytica (strain ATCC 30459 / HM-1:IMSS / ABRM)).